Consider the following 110-residue polypeptide: Glutaredoxin-1 (110 aa).

The Glutaredoxin domain maps to 7 to 110; sequence IKHVKDLIAE…EELLEPILAN (104 aa). Residue lysine 11 forms a Glycyl lysine isopeptide (Lys-Gly) (interchain with G-Cter in ubiquitin) linkage. Residues 24–29, glutamine 63, valine 75, and 88–89 contribute to the glutathione site; these read KTYCPY and ND. An S-glutathionyl cysteine; alternate modification is found at cysteine 27. Cysteine 27 and cysteine 30 are oxidised to a cystine.

The protein belongs to the glutaredoxin family.

Its subcellular location is the cytoplasm. The protein resides in the nucleus. The enzyme catalyses 2 glutathione + H2O2 = glutathione disulfide + 2 H2O. The catalysed reaction is 1-chloro-2,4-dinitrobenzene + glutathione = 2,4-dinitrophenyl-S-glutathione + chloride + H(+). It catalyses the reaction RX + glutathione = an S-substituted glutathione + a halide anion + H(+). Its function is as follows. Component of the glutathione system which performs several activities such as glutathione-dependent oxidoreductase, glutathione peroxidase and glutathione S-transferase (GST) activity. The disulfide bond functions as an electron carrier in the glutathione-dependent synthesis of deoxyribonucleotides by the enzyme ribonucleotide reductase. In addition, it is also involved in reducing cytosolic protein- and non-protein-disulfides in a coupled system with glutathione reductase. Required for resistance to reactive oxygen species (ROS) by directly reducing hydroperoxides and for the detoxification of ROS-mediated damage. GRX1 is less active as an oxidoreductase than GRX2. In Saccharomyces cerevisiae (strain ATCC 204508 / S288c) (Baker's yeast), this protein is Glutaredoxin-1 (GRX1).